The chain runs to 314 residues: Versiconal hemiacetal acetate esterase (314 aa).

Residues 85 to 87 (HGG) carry the Involved in the stabilization of the negatively charged intermediate by the formation of the oxyanion hole motif. Active-site residues include Ser154, Asp255, and His285.

It belongs to the 'GDXG' lipolytic enzyme family.

The catalysed reaction is (2S,3S)-versiconal hemiacetal acetate + H2O = (2S-3S)-versiconal hemiacetal + acetate + H(+). The enzyme catalyses (3S)-versiconol acetate + H2O = (S)-versiconol + acetate + H(+). It functions in the pathway mycotoxin biosynthesis; aflatoxin biosynthesis. Versiconal hemiacetal acetate esterase; part of the gene cluster that mediates the biosynthesis of aflatoxins, a group of polyketide-derived furanocoumarins, and part of the most toxic and carcinogenic compounds among the known mycotoxins. The four major aflatoxins produced by A.parasiticus are aflatoxin B1 (AFB1), aflatoxin B2 (AFB2), aflatoxin G1 (AFG1) and aflatoxin G2 (AFG2). Within the aflatoxin pathway, the versiconal hemiacetal acetate esterase aflJ converts versiconal hemiacetal acetate (VHA) into versiconal (VAL). The biosynthesis of aflatoxins begins with the norsolorinic acid synthase aflC that combines a hexanoyl starter unit produced by the fatty acid synthase aflA/aflB and 7 malonyl-CoA extender units to synthesize the precursor NOR. The second step is the conversion of NOR to averantin and requires the norsolorinic acid ketoreductase aflD, which catalyzes the dehydration of norsolorinic acid to form (1'S)-averantin. The norsolorinic acid reductases aflE and aflF may also play a role in the conversion of NOR to AVN. The cytochrome P450 monooxygenase aflG then catalyzes the hydroxylation of AVN to 5'hydroxyaverantin (HAVN). The next step is performed by the 5'-hydroxyaverantin dehydrogenase aflH that transforms HAVN to 5'-oxoaverantin (OAVN) which is further converted to averufin (AVF) by aflK that plays a dual role in the pathway, as a 5'-oxoaverantin cyclase that mediates conversion of 5'-oxoaverantin, as well as a versicolorin B synthase in a later step in the pathway. The averufin oxidase aflI catalyzes the conversion of AVF to versiconal hemiacetal acetate (VHA). VHA is then the substrate for the versiconal hemiacetal acetate esterase aflJ to yield versiconal (VAL). Versicolorin B synthase aflK then converts VAL to versicolorin B (VERB) by closing the bisfuran ring of aflatoxin which is required for DNA-binding, thus giving to aflatoxin its activity as a mutagen. Then, the activity of the versicolorin B desaturase aflL leads to versicolorin A (VERA). A branch point starts from VERB since it can also be converted to dihydrodemethylsterigmatocystin (DMDHST), probably also by aflL, VERA being a precursor for aflatoxins B1 and G1, and DMDHST for aflatoxins B2 and G2. Next, the versicolorin reductase aflM and the cytochrome P450 monooxygenase aflN are involved in conversion of VERA to demethylsterigmatocystin (DMST). AflX and aflY seem also involved in this step, through probable aflX-mediated epoxide ring-opening step following versicolorin A oxidation and aflY-mediated Baeyer-Villiger oxidation required for the formation of the xanthone ring. The methyltransferase aflO then leads to the modification of DMST to sterigmatocystin (ST), and of DMDHST to dihydrosterigmatocystin (DHST). Both ST and DHST are then substrates of the O-methyltransferase aflP to yield O-methylsterigmatocystin (OMST) and dihydro-O-methylsterigmatocystin (DHOMST), respectively. Finally OMST is converted to aflatoxins B1 and G1, and DHOMST to aflatoxins B2 and G2, via the action of several enzymes including O-methylsterigmatocystin oxidoreductase aflQ, the cytochrome P450 monooxygenase aflU, but also the NADH-dependent flavin oxidoreductase nadA which is specifically required for the synthesis of AFG1. This is Versiconal hemiacetal acetate esterase from Aspergillus parasiticus (strain ATCC 56775 / NRRL 5862 / SRRC 143 / SU-1).